We begin with the raw amino-acid sequence, 881 residues long: MHLHLLFLLALCGAGCMAAGPSYSLRGSWRVSNGNSSLELPATVPGYVHSALQQHGLIQDPYYRFNDLNYRWISLDNWTYSTEFKIPFNRSEWQKVKLIFDGVDTVAEILFNNVTIGKTDNMFTRYSFDVTNVVKDVNSLKLRFQSAVQYAECQSKAHTQYRVPPECPPVEQKGECHVNFIRKEQCSFSWDWGPSFPSQGIWKDVRIEAYNIAHLDHLTFLPLYDNTSQAWTIEIEASFDVVSTKPVGGQVTIAIPELKTQQANHIELQHGQRIVKLLVKIRKDVTVETWWPHGHGNQTGYNTTILFALDGGLKIEKAAKVYFRTVQLIEEPITGSPGLSFYFKINGLPIFLKGSNWIPADSFQDKVTSELLQLLLQSAVDANMNTLRVWGGGIYEQDEFYALCDELGIMVWQDFMFASALYPTEPGFLESVRKEVTYQVRRLKSHPSVIIWSGNNENEVALRVNWFHVNPRDLGTYINDYVTLYVKTIREIVLSEDRSRPFIASSPTNGVKTMTEGWISKDPYSTQYGDMHFYDYFSDCWDWKVFPKARLVSEYGYQSWPSFSTLQKVSRQEDWSYSSRFSLHRQHHGNGNNEMLHQVQLHFQLPQRRDPVRAFKDTIYLTQVMQAQCIKTETEFYLRSRSEIVNGEGHTMGALYWQLNDIWQAPSWASLEYGGKWKMLHYFAQRFFAPLLPVGFEDEGVFYVYGVSDLHKDYPTKLTVRLHRWSSQKPLCTFVSLSAVIKAGEAMVLFQMPVSKLLKRCKECTRDTCVVSFYLSTDNELFSPTNYHFLSSLKDAKGMVKANITVSISQKGDLFVFDLKSSTSAITPFVWLDVGSIPGRFSDNGFLMIKKELSVLFYPWKPTSKSELQQAFSVTSLTDLY.

A signal peptide spans 1 to 18 (MHLHLLFLLALCGAGCMA). Asn35, Asn77, Asn89, and Asn113 each carry an N-linked (GlcNAc...) asparagine glycan. Cys167 and Cys176 are oxidised to a cystine. Substrate is bound at residue 190–192 (WDW). Residues Asn226, Asn297, and Asn302 are each glycosylated (N-linked (GlcNAc...) asparagine). Asn456 contributes to the substrate binding site. Catalysis depends on Glu457, which acts as the Proton donor. 3 cysteine pairs are disulfide-bonded: Cys540-Cys629, Cys732-Cys761, and Cys764-Cys769. The Nucleophile role is filled by Glu554. N-linked (GlcNAc...) asparagine glycosylation is present at Asn803.

It belongs to the glycosyl hydrolase 2 family. As to quaternary structure, monomer.

The protein resides in the lysosome. It carries out the reaction Hydrolysis of terminal, non-reducing beta-D-mannose residues in beta-D-mannosides.. It participates in glycan metabolism; N-glycan degradation. Functionally, exoglycosidase that cleaves the single beta-linked mannose residue from the non-reducing end of all N-linked glycoprotein oligosaccharides. This Rattus norvegicus (Rat) protein is Beta-mannosidase.